A 140-amino-acid chain; its full sequence is Nucleoside diphosphate kinase (140 aa).

Residues Lys-11, Phe-59, Arg-87, Thr-93, Arg-104, and Asn-114 each contribute to the ATP site. His-117 (pros-phosphohistidine intermediate) is an active-site residue.

It belongs to the NDK family. Mg(2+) is required as a cofactor.

The protein localises to the cytoplasm. The catalysed reaction is a 2'-deoxyribonucleoside 5'-diphosphate + ATP = a 2'-deoxyribonucleoside 5'-triphosphate + ADP. It catalyses the reaction a ribonucleoside 5'-diphosphate + ATP = a ribonucleoside 5'-triphosphate + ADP. Major role in the synthesis of nucleoside triphosphates other than ATP. The ATP gamma phosphate is transferred to the NDP beta phosphate via a ping-pong mechanism, using a phosphorylated active-site intermediate. This is Nucleoside diphosphate kinase from Metallosphaera sedula (strain ATCC 51363 / DSM 5348 / JCM 9185 / NBRC 15509 / TH2).